Reading from the N-terminus, the 366-residue chain is Carbamoyl phosphate synthase small chain (366 aa).

A CPSase region spans residues 1–172; the sequence is MYGILVLEDG…TYNAENEKTS (172 aa). Residues Ser45, Gly220, and Gly222 each coordinate L-glutamine. A Glutamine amidotransferase type-1 domain is found at 172–363; the sequence is SCVLIDCGVK…VELGIKFKAE (192 aa). The active-site Nucleophile is the Cys247. Leu248, Gln251, Asn289, Gly291, and Phe292 together coordinate L-glutamine. Catalysis depends on residues His336 and Glu338.

Belongs to the CarA family. As to quaternary structure, composed of two chains; the small (or glutamine) chain promotes the hydrolysis of glutamine to ammonia, which is used by the large (or ammonia) chain to synthesize carbamoyl phosphate. Tetramer of heterodimers (alpha,beta)4.

It carries out the reaction hydrogencarbonate + L-glutamine + 2 ATP + H2O = carbamoyl phosphate + L-glutamate + 2 ADP + phosphate + 2 H(+). The enzyme catalyses L-glutamine + H2O = L-glutamate + NH4(+). The protein operates within amino-acid biosynthesis; L-arginine biosynthesis; carbamoyl phosphate from bicarbonate: step 1/1. It functions in the pathway pyrimidine metabolism; UMP biosynthesis via de novo pathway; (S)-dihydroorotate from bicarbonate: step 1/3. Small subunit of the glutamine-dependent carbamoyl phosphate synthetase (CPSase). CPSase catalyzes the formation of carbamoyl phosphate from the ammonia moiety of glutamine, carbonate, and phosphate donated by ATP, constituting the first step of 2 biosynthetic pathways, one leading to arginine and/or urea and the other to pyrimidine nucleotides. The small subunit (glutamine amidotransferase) binds and cleaves glutamine to supply the large subunit with the substrate ammonia. This Methanococcus maripaludis (strain C7 / ATCC BAA-1331) protein is Carbamoyl phosphate synthase small chain.